A 144-amino-acid polypeptide reads, in one-letter code: Neuritin-B (144 aa).

An N-terminal signal peptide occupies residues 1–27; that stretch reads MGLKLSGRYIFLVLAVHLAYLLQAVKA. Ser114 carries the GPI-anchor amidated serine lipid modification. The propeptide at 115-144 is removed in mature form; it reads TGAPGPRLLFPAFLPLLIVFLSALLNWVLQ.

Belongs to the neuritin family.

It is found in the cell membrane. Its function is as follows. Modulates postsynaptic dendritic arbor elaboration and synaptic maturation. The protein is Neuritin-B (nrn1-b) of Xenopus laevis (African clawed frog).